A 207-amino-acid chain; its full sequence is Protein phosphatase inhibitor 2 (207 aa).

Disordered regions lie at residues 1 to 44, 65 to 97, and 110 to 146; these read MAAS…SKKS, LMKI…ALTP, and ESLE…EMKR. A2 carries the post-translational modification N-acetylalanine. The tract at residues 12–17 is required for binding PPP1CC; the sequence is KGILKN. Residues 19-28 show a composition bias toward low complexity; it reads SSTTSSVVST. Over residues 35-44 the composition is skewed to basic and acidic residues; that stretch reads SVDEELSKKS. Residues 43-55 form a required for binding PPP1CC region; that stretch reads KSQKWDEMSILAT. The residue at position 44 (S44) is a Phosphoserine; by ATM. T73 is subject to Phosphothreonine; by GSK3. Acidic residues predominate over residues 80–91; sequence ADDEDALSDSET. Phosphoserine is present on residues S87 and S89. T92 and T96 each carry phosphothreonine. Over residues 112–122 the composition is skewed to basic and acidic residues; it reads LEPKYRVREQE. Residues S123, S124, S129, and S132 each carry the phosphoserine modification. The segment covering 123–132 has biased composition (acidic residues); sequence SSGDEDSDLS. The span at 133–145 shows a compositional bias: basic and acidic residues; that stretch reads PEEREKKRQFEMK. Residues 149 to 152 form a required for binding PPP1CC catalytic center, displacing metal ions and inhibition of PPP1CC catalytic activity region; sequence HYNE. The disordered stretch occupies residues 165–207; sequence KDLNDEEEDEEMSETAAGESMNMEESSQGSATSDQLQNKSQSS. Residues 168-177 are compositionally biased toward acidic residues; the sequence is NDEEEDEEMS. Polar residues predominate over residues 187 to 207; it reads MEESSQGSATSDQLQNKSQSS.

Belongs to the protein phosphatase inhibitor 2 family. As to quaternary structure, heterodimer with PP1. In terms of processing, phosphorylation on Ser-44 by ATM activates PP1 by dissociating the PP1-PPP1R2 complex. Phosphorylation on Thr-73 by GSK3 activates PP1 by dissociating the PP1-PPP1R2 complex.

Its function is as follows. Inhibitor of protein-phosphatase 1. The polypeptide is Protein phosphatase inhibitor 2 (PPP1R2) (Bos taurus (Bovine)).